A 276-amino-acid polypeptide reads, in one-letter code: Tryptophan synthase alpha chain (276 aa).

Residues Glu-49 and Asp-60 each act as proton acceptor in the active site.

This sequence belongs to the TrpA family. In terms of assembly, tetramer of two alpha and two beta chains.

It carries out the reaction (1S,2R)-1-C-(indol-3-yl)glycerol 3-phosphate + L-serine = D-glyceraldehyde 3-phosphate + L-tryptophan + H2O. Its pathway is amino-acid biosynthesis; L-tryptophan biosynthesis; L-tryptophan from chorismate: step 5/5. Functionally, the alpha subunit is responsible for the aldol cleavage of indoleglycerol phosphate to indole and glyceraldehyde 3-phosphate. In Corynebacterium aurimucosum (strain ATCC 700975 / DSM 44827 / CIP 107346 / CN-1) (Corynebacterium nigricans), this protein is Tryptophan synthase alpha chain.